A 423-amino-acid polypeptide reads, in one-letter code: FAD-dependent monooxygenase asL6 (423 aa).

FAD-binding positions include 10–13, 34–35, arginine 108, tyrosine 290, and aspartate 312; these read AGVA and ER. A helical transmembrane segment spans residues 371–391; it reads GMGMFQSKFGVGVFYVLLAII.

The protein belongs to the aromatic-ring hydroxylase family. FAD serves as cofactor.

Its subcellular location is the membrane. Its pathway is secondary metabolite biosynthesis; terpenoid biosynthesis. Functionally, FAD-dependent monooxygenase; part of the gene cluster that mediates the biosynthesis of xenovulene A, an unusual meroterpenoid that has potent inhibitory effects on the human gamma-aminobutyrate A (GABAA) benzodiazepine receptor. The first step of xenovulene A biosynthesis is the biosynthesis of 3-methylorcinaldehyde performed by the non-reducing polyketide synthase aspks1. The salicylate hydroxylase asL1 then catalyzes the oxidative dearomatization of 3-methylorcinaldehyde to yield a dearomatized hydroxycyclohexadione. The 2-oxoglutarate-dependent dioxygenase asL3 further catalyzes the oxidative ring expansion to provide the first tropolone metabolite. The cytochrome P450 monooxygenase asR2 allows the synthesis of tropolone hemiacetal. In parallel, a previously unrecognised class of terpene cyclase, asR6, produces alpha-humulene from farnesylpyrophosphate (FPP). The putative Diels-Alderase asR5 probably catalyzes the formation of the tropolone-humulene skeleton by linking humulene and the polyketide moiety. Oxidative-ring contractions catalyzed by asL4 and asL6 then processively remove carbon atoms from the polyketide to yield xenovulene A. This is FAD-dependent monooxygenase asL6 from Sarocladium schorii (Acremonium strictum (strain IMI 501407)).